A 1237-amino-acid polypeptide reads, in one-letter code: ATP-dependent RNA helicase DEAH13 (1237 aa).

2 disordered regions span residues 1-51 and 115-148; these read MASV…NSNV and AMQLSKAGVETEHSDESVEQNDNDDDSCMDEPTT. The span at 24 to 38 shows a compositional bias: polar residues; that stretch reads SNKMQDKLNSNNNTG. Over residues 131-143 the composition is skewed to acidic residues; the sequence is SVEQNDNDDDSCM. Residues 251 to 443 form the Helicase ATP-binding domain; it reads MEAINRHPAV…KRLFPNIPPL (193 aa). 264–271 contacts ATP; that stretch reads GQTGCGKT. The DEAH box motif lies at 367-370; the sequence is DEAH. Positions 543 to 585 are disordered; sequence DDDSNNQNSRFSSHGEDPSDIGDGNYDDDFEEEDMYESDEDRD. Acidic residues predominate over residues 567–585; that stretch reads NYDDDFEEEDMYESDEDRD. Residues 605–776 enclose the Helicase C-terminal domain; it reads ALRAAFNALA…GVILLMKSMN (172 aa). Residues 876-910 are disordered; sequence EKKNESKDADKTVKQEDKQRKKDRKEKIKAARDRF.

The protein belongs to the DEAD box helicase family. DEAH subfamily.

It catalyses the reaction ATP + H2O = ADP + phosphate + H(+). The chain is ATP-dependent RNA helicase DEAH13 from Arabidopsis thaliana (Mouse-ear cress).